The chain runs to 37 residues: Large ribosomal subunit protein bL36 (37 aa).

The protein belongs to the bacterial ribosomal protein bL36 family.

The polypeptide is Large ribosomal subunit protein bL36 (Solidesulfovibrio magneticus (strain ATCC 700980 / DSM 13731 / RS-1) (Desulfovibrio magneticus)).